The sequence spans 173 residues: Adenine phosphoribosyltransferase (173 aa).

Belongs to the purine/pyrimidine phosphoribosyltransferase family. In terms of assembly, homodimer.

The protein resides in the cytoplasm. It carries out the reaction AMP + diphosphate = 5-phospho-alpha-D-ribose 1-diphosphate + adenine. The protein operates within purine metabolism; AMP biosynthesis via salvage pathway; AMP from adenine: step 1/1. Catalyzes a salvage reaction resulting in the formation of AMP, that is energically less costly than de novo synthesis. The polypeptide is Adenine phosphoribosyltransferase (Thermoanaerobacter sp. (strain X514)).